Here is a 523-residue protein sequence, read N- to C-terminus: Nitrogenase molybdenum-iron protein beta chain (523 aa).

Residues Cys70, Cys95, Cys153, and Ser188 each contribute to the [8Fe-7S] cluster site.

It belongs to the NifD/NifK/NifE/NifN family. In terms of assembly, tetramer of two alpha and two beta chains. Forms complex with the iron protein (nitrogenase component 2). It depends on [8Fe-7S] cluster as a cofactor.

It carries out the reaction N2 + 8 reduced [2Fe-2S]-[ferredoxin] + 16 ATP + 16 H2O = H2 + 8 oxidized [2Fe-2S]-[ferredoxin] + 2 NH4(+) + 16 ADP + 16 phosphate + 6 H(+). With respect to regulation, nitrogenase holoenzyme is subject to 'conformational protection' by FeSII; under oxidizing conditions FeSII binds to the holoenzyme and reversibly protects it from oxidation. Its function is as follows. This molybdenum-iron protein is part of the nitrogenase complex that catalyzes the key enzymatic reactions in nitrogen fixation. The protein is Nitrogenase molybdenum-iron protein beta chain (nifK) of Azotobacter vinelandii.